Here is a 475-residue protein sequence, read N- to C-terminus: Aspartyl/glutamyl-tRNA(Asn/Gln) amidotransferase subunit B (475 aa).

It belongs to the GatB/GatE family. GatB subfamily. In terms of assembly, heterotrimer of A, B and C subunits.

It carries out the reaction L-glutamyl-tRNA(Gln) + L-glutamine + ATP + H2O = L-glutaminyl-tRNA(Gln) + L-glutamate + ADP + phosphate + H(+). It catalyses the reaction L-aspartyl-tRNA(Asn) + L-glutamine + ATP + H2O = L-asparaginyl-tRNA(Asn) + L-glutamate + ADP + phosphate + 2 H(+). Allows the formation of correctly charged Asn-tRNA(Asn) or Gln-tRNA(Gln) through the transamidation of misacylated Asp-tRNA(Asn) or Glu-tRNA(Gln) in organisms which lack either or both of asparaginyl-tRNA or glutaminyl-tRNA synthetases. The reaction takes place in the presence of glutamine and ATP through an activated phospho-Asp-tRNA(Asn) or phospho-Glu-tRNA(Gln). The chain is Aspartyl/glutamyl-tRNA(Asn/Gln) amidotransferase subunit B from Chromobacterium violaceum (strain ATCC 12472 / DSM 30191 / JCM 1249 / CCUG 213 / NBRC 12614 / NCIMB 9131 / NCTC 9757 / MK).